We begin with the raw amino-acid sequence, 54 residues long: UPF0391 membrane protein Daro_2080 (54 aa).

The next 2 membrane-spanning stretches (helical) occupy residues 5–25 (AIVF…GIAA) and 30–50 (IAKI…VMGF).

The protein belongs to the UPF0391 family.

The protein resides in the cell membrane. This chain is UPF0391 membrane protein Daro_2080, found in Dechloromonas aromatica (strain RCB).